Reading from the N-terminus, the 203-residue chain is Shikimate kinase (203 aa).

38 to 43 (GAGKST) is an ATP binding site. Serine 42 provides a ligand contact to Mg(2+). Residues aspartate 60, arginine 84, and glycine 106 each coordinate substrate. Arginine 144 serves as a coordination point for ATP. Residue arginine 163 coordinates substrate.

The protein belongs to the shikimate kinase family. Monomer. It depends on Mg(2+) as a cofactor.

It localises to the cytoplasm. The enzyme catalyses shikimate + ATP = 3-phosphoshikimate + ADP + H(+). Its pathway is metabolic intermediate biosynthesis; chorismate biosynthesis; chorismate from D-erythrose 4-phosphate and phosphoenolpyruvate: step 5/7. Catalyzes the specific phosphorylation of the 3-hydroxyl group of shikimic acid using ATP as a cosubstrate. This is Shikimate kinase from Rhodopseudomonas palustris (strain ATCC BAA-98 / CGA009).